A 908-amino-acid polypeptide reads, in one-letter code: NADH-quinone oxidoreductase subunit G (908 aa).

Residues 2-83 (ATIHVDGKEY…GTFISIDDEE (82 aa)) form the 2Fe-2S ferredoxin-type domain. Residues Cys-34, Cys-45, Cys-48, and Cys-67 each coordinate [2Fe-2S] cluster. The 4Fe-4S His(Cys)3-ligated-type domain maps to 83 to 122 (EAKQFRESVVEWLMTNHPHDCPVCEEGGNCHLQDMTVMTG). [4Fe-4S] cluster contacts are provided by His-99, Cys-103, Cys-106, Cys-112, Cys-151, Cys-154, Cys-157, Cys-201, Cys-228, Cys-231, Cys-235, and Cys-263. One can recognise a 4Fe-4S Mo/W bis-MGD-type domain in the interval 221–277 (MQFAPSICQQCSIGCNISPGERYGELRRIENRYNGTVNHYFLCDRGRFGYGYVNLKD).

This sequence belongs to the complex I 75 kDa subunit family. In terms of assembly, composed of 13 different subunits. Subunits NuoCD, E, F, and G constitute the peripheral sector of the complex. Requires [2Fe-2S] cluster as cofactor. The cofactor is [4Fe-4S] cluster.

It carries out the reaction a quinone + NADH + 5 H(+)(in) = a quinol + NAD(+) + 4 H(+)(out). Its function is as follows. NDH-1 shuttles electrons from NADH, via FMN and iron-sulfur (Fe-S) centers, to quinones in the respiratory chain. The immediate electron acceptor for the enzyme in this species is believed to be ubiquinone. Couples the redox reaction to proton translocation (for every two electrons transferred, four hydrogen ions are translocated across the cytoplasmic membrane), and thus conserves the redox energy in a proton gradient. This is NADH-quinone oxidoreductase subunit G (nuoG) from Escherichia coli O6:H1 (strain CFT073 / ATCC 700928 / UPEC).